The sequence spans 366 residues: Terpene synthase 4 (366 aa).

Residues Asp-91–Arg-96 carry the DDxx(x)D/E motif motif. Positions Asn-241–Glu-249 match the NDxxSxxxD/E motif motif.

This sequence belongs to the terpene synthase family.

It catalyses the reaction (2E,6E)-farnesyl diphosphate = (1S,2S,4R)-beta-elemene + diphosphate. Its function is as follows. Terpene synthase that converts its substrate farnesyl diphosphate (FPP) into the sesquiterpenes bicycloelemene, beta-elemene and 2 yet unidentified sesquiterpenes. This Dictyostelium purpureum (Slime mold) protein is Terpene synthase 4.